Consider the following 429-residue polypeptide: Ribosomal RNA small subunit methyltransferase B (429 aa).

Residues Cys-254–Lys-260, Asp-277, Asp-303, and Asp-322 contribute to the S-adenosyl-L-methionine site. Cys-375 serves as the catalytic Nucleophile.

This sequence belongs to the class I-like SAM-binding methyltransferase superfamily. RsmB/NOP family.

Its subcellular location is the cytoplasm. It carries out the reaction cytidine(967) in 16S rRNA + S-adenosyl-L-methionine = 5-methylcytidine(967) in 16S rRNA + S-adenosyl-L-homocysteine + H(+). Its function is as follows. Specifically methylates the cytosine at position 967 (m5C967) of 16S rRNA. This chain is Ribosomal RNA small subunit methyltransferase B, found in Escherichia coli O6:K15:H31 (strain 536 / UPEC).